Reading from the N-terminus, the 163-residue chain is Nucleotide-binding protein Dde_2479 (163 aa).

The protein belongs to the YajQ family.

Its function is as follows. Nucleotide-binding protein. The protein is Nucleotide-binding protein Dde_2479 of Oleidesulfovibrio alaskensis (strain ATCC BAA-1058 / DSM 17464 / G20) (Desulfovibrio alaskensis).